The chain runs to 644 residues: Fructose-1,6-bisphosphatase class 3 (644 aa).

The protein belongs to the FBPase class 3 family. It depends on Mn(2+) as a cofactor.

It carries out the reaction beta-D-fructose 1,6-bisphosphate + H2O = beta-D-fructose 6-phosphate + phosphate. It functions in the pathway carbohydrate biosynthesis; gluconeogenesis. This chain is Fructose-1,6-bisphosphatase class 3, found in Oceanobacillus iheyensis (strain DSM 14371 / CIP 107618 / JCM 11309 / KCTC 3954 / HTE831).